The following is a 114-amino-acid chain: UPF0757 protein YmgG (114 aa).

This sequence belongs to the UPF0757 family.

The polypeptide is UPF0757 protein YmgG (Shigella flexneri).